A 431-amino-acid polypeptide reads, in one-letter code: Adenosylhomocysteinase (431 aa).

Threonine 56, aspartate 131, and glutamate 156 together coordinate substrate. 157-159 (TTT) is an NAD(+) binding site. Lysine 186 and aspartate 190 together coordinate substrate. Residues asparagine 191, 222-227 (GDVGKG), glutamate 243, 299-301 (IGH), and asparagine 345 contribute to the NAD(+) site.

Belongs to the adenosylhomocysteinase family. In terms of assembly, homotetramer. It depends on NAD(+) as a cofactor.

It carries out the reaction S-adenosyl-L-homocysteine + H2O = L-homocysteine + adenosine. The protein operates within amino-acid biosynthesis; L-homocysteine biosynthesis; L-homocysteine from S-adenosyl-L-homocysteine: step 1/1. Its function is as follows. Adenosylhomocysteine is a competitive inhibitor of S-adenosyl-L-methionine-dependent methyl transferase reactions; therefore adenosylhomocysteinase may play a key role in the control of methylations via regulation of the intracellular concentration of adenosylhomocysteine. The protein is Adenosylhomocysteinase (sahA) of Dictyostelium discoideum (Social amoeba).